We begin with the raw amino-acid sequence, 212 residues long: Ribosomal RNA large subunit methyltransferase E (212 aa).

The span at 1-10 (MATCRRRRRG) shows a compositional bias: basic residues. The disordered stretch occupies residues 1 to 24 (MATCRRRRRGCNSQARRSRHESDP). S-adenosyl-L-methionine-binding residues include G66, W68, D86, D102, and D127. K167 acts as the Proton acceptor in catalysis.

This sequence belongs to the class I-like SAM-binding methyltransferase superfamily. RNA methyltransferase RlmE family.

It localises to the cytoplasm. It carries out the reaction uridine(2552) in 23S rRNA + S-adenosyl-L-methionine = 2'-O-methyluridine(2552) in 23S rRNA + S-adenosyl-L-homocysteine + H(+). Specifically methylates the uridine in position 2552 of 23S rRNA at the 2'-O position of the ribose in the fully assembled 50S ribosomal subunit. The protein is Ribosomal RNA large subunit methyltransferase E of Halorhodospira halophila (strain DSM 244 / SL1) (Ectothiorhodospira halophila (strain DSM 244 / SL1)).